We begin with the raw amino-acid sequence, 512 residues long: N-acetyltryptophan 6-hydroxylase ivoC (512 aa).

Residues 6–26 (LVFSFPAWALLLVLTLLYTLY) traverse the membrane as a helical segment. N-linked (GlcNAc...) asparagine glycosylation is present at Asn-118. Cys-453 is a binding site for heme.

The protein belongs to the cytochrome P450 family. It depends on heme as a cofactor.

The protein localises to the membrane. The protein operates within pigment biosynthesis. Its function is as follows. N-acetyltryptophan 6-hydroxylase; part of the pathway that mediates the biosynthesis of the gray-brown conidiophore pigment. The first step of the pathway is performed by the nonribosomal peptide synthetase ivoA that catalyzes ATP-dependent unidirectional stereoinversion of L-tryptophan to D-tryptophan with complete conversion. While the stereoinversion is catalyzed by the epimerization (E) domain of ivoA, the terminal condensation (C) domain stereoselectively hydrolyzes D-tryptophanyl-S-phosphopantetheine thioester and thus represents a non-canonical C domain function. D-tryptophan is acetylated, probably by an endogenous acetyltransferase. N-acetyltryptophan is further 6-hydroxylated into N-acetyl-6-hydroxytryptophan (AHT) by the cytochrome P450 monooxygenase ivoC. N-acetyl-6-hydroxytryptophan is substrate of the N-acetyl-6-hydroxytryptophan oxidase ivoB to produce the gray-brown conidiophore pigment. This Emericella nidulans (strain FGSC A4 / ATCC 38163 / CBS 112.46 / NRRL 194 / M139) (Aspergillus nidulans) protein is N-acetyltryptophan 6-hydroxylase ivoC.